The chain runs to 297 residues: 4-hydroxy-tetrahydrodipicolinate synthase (297 aa).

Threonine 46 serves as a coordination point for pyruvate. Tyrosine 134 (proton donor/acceptor) is an active-site residue. Residue lysine 163 is the Schiff-base intermediate with substrate of the active site. Isoleucine 205 provides a ligand contact to pyruvate.

Belongs to the DapA family. Homotetramer; dimer of dimers.

The protein resides in the cytoplasm. The catalysed reaction is L-aspartate 4-semialdehyde + pyruvate = (2S,4S)-4-hydroxy-2,3,4,5-tetrahydrodipicolinate + H2O + H(+). It functions in the pathway amino-acid biosynthesis; L-lysine biosynthesis via DAP pathway; (S)-tetrahydrodipicolinate from L-aspartate: step 3/4. Its function is as follows. Catalyzes the condensation of (S)-aspartate-beta-semialdehyde [(S)-ASA] and pyruvate to 4-hydroxy-tetrahydrodipicolinate (HTPA). The polypeptide is 4-hydroxy-tetrahydrodipicolinate synthase (Thermoanaerobacter pseudethanolicus (strain ATCC 33223 / 39E) (Clostridium thermohydrosulfuricum)).